A 260-amino-acid chain; its full sequence is Fibronectin type III domain-containing protein 5 (260 aa).

A disordered region spans residues 1–56 (MQAARGGAGRPERPGRPGRGPERERERPPGAGAASPCAAPGLPAGGATIHPGSPSA). Over residues 10–28 (RPERPGRPGRGPERERERP) the composition is skewed to basic and acidic residues. Positions 29–56 (PGAGAASPCAAPGLPAGGATIHPGSPSA) are enriched in low complexity. The Fibronectin type-III domain occupies 84–175 (APVNVTVRHL…EPVLFKTPRE (92 aa)). Residues asparagine 87 and asparagine 132 are each glycosylated (N-linked (GlcNAc...) asparagine). The helical transmembrane segment at 201-221 (GEVLIIVVVLFMWAGVIALFC) threads the bilayer. Residues 230-241 (NEPNNNKEKTKS) are compositionally biased toward basic and acidic residues. The tract at residues 230 to 260 (NEPNNNKEKTKSASETSTPEHQGGGLLRSKI) is disordered. The segment covering 251-260 (QGGGLLRSKI) has biased composition (gly residues). Positions 258–260 (SKI) match the Microbody targeting signal motif.

Dimer; may exist in other oligomeric forms. Post-translationally, the extracellular domain is cleaved and released from the cell membrane. N-Glycosylated. In terms of tissue distribution, widely expressed, with highest levels in heart. Very low expression, if any, in colon, pancreas and spleen.

The protein localises to the cell membrane. It localises to the peroxisome membrane. It is found in the secreted. Functionally, mediates beneficial effects of muscular exercise. Induces browning of white adipose tissue by stimulating UCP1 expression, at least in part, via the nuclear receptor PPARA. This chain is Fibronectin type III domain-containing protein 5 (FNDC5), found in Homo sapiens (Human).